Here is a 179-residue protein sequence, read N- to C-terminus: DELTA-actitoxin-Afr1a (179 aa).

The N-terminal alpha-helix that contributes to the pore stretch occupies residues 1–29 (SADVAGAVIDGAGLGFDVLKTVLEALGNV). R31 serves as a coordination point for an N-(acyl)-sphingosylphosphocholine. The N-acetyl-D-glucosamine 6-sulfate site is built by Y51 and R53. Positions 53, 54, 79, 85, 108, 113, 114, 116, 133, 137, 138, 144, and 168 each coordinate an N-(acyl)-sphingosylphosphocholine. The interval 105–120 (SVPYDYNWYSNWWNVR) is trp-rich region, which is important for the binding to lipid membrane. An N-acetyl-D-glucosamine 6-sulfate-binding site is contributed by Y138. Positions 144–146 (RGD) match the Cell attachment site, crucial for protein stability motif.

Belongs to the actinoporin family. Sea anemone subfamily. As to quaternary structure, octamer or nonamer in membranes. Monomer in the soluble state.

The protein localises to the secreted. The protein resides in the nematocyst. Its subcellular location is the target cell membrane. Functionally, pore-forming toxin (PFT) that consists of a crown-shaped octamer or nonamer that forms cation-selective hydrophilic pores of about 1.5 nm (inside) and 13 nm (outside). It causes cardiac stimulation and cytolysis (EC(50)=1.6 nM on erythrocytes). Interestingly, the Phe-16 is crucial for hemolysis. Pore formation is a multi-step process that involves specific recognition of membrane sphingomyelin (but neither cholesterol nor phosphatidylcholine) using aromatic rich region and adjacent phosphocholine (POC) binding site, firm binding to the membrane (mainly driven by hydrophobic interactions) accompanied by the transfer of the N-terminal region to the lipid-water interface and finally pore formation after oligomerization of monomers. It is probable that a dimeric form is an assembly intermediate before the complete oligomerization. The formation of stable pores occurs only in vesicles composed of DOPC/SM (there is no oligomerization when the PFT is treated with vesicles of DOPC or SM alone). The transmembrane pore displays 8 lateral perforations, one at each subunit-subunit interface, partially occupied by the acyl-chain region of a bridging lipid. Each pore contains 24 lipid molecules, firmly bound to each subunit, that is, 3 lipids (L1, L2, L3, L4 and/or L5) are associated to each subunit. Lipid L1 bridges 2 subunits, whereas lipids L2 and L3 bind to sites at single subunit. The sequence is that of DELTA-actitoxin-Afr1a from Actinia fragacea (Strawberry anemone).